Consider the following 306-residue polypeptide: Dermonecrotic toxin LiSicTox-alphaIA2ai (306 aa).

The first 18 residues, 1–18 (MLPYIALILVCWSVLSQA), serve as a signal peptide directing secretion. The propeptide occupies 19–26 (AQTDVEGR). Histidine 38 is a catalytic residue. Glutamate 58 and aspartate 60 together coordinate Mg(2+). Histidine 74 acts as the Nucleophile in catalysis. Cystine bridges form between cysteine 78/cysteine 84 and cysteine 80/cysteine 223. Residue aspartate 118 coordinates Mg(2+). N-linked (GlcNAc...) asparagine glycosylation is present at asparagine 283.

It belongs to the arthropod phospholipase D family. Class II subfamily. Class IIa sub-subfamily. It depends on Mg(2+) as a cofactor. Expressed by the venom gland.

Its subcellular location is the secreted. It catalyses the reaction an N-(acyl)-sphingosylphosphocholine = an N-(acyl)-sphingosyl-1,3-cyclic phosphate + choline. The enzyme catalyses an N-(acyl)-sphingosylphosphoethanolamine = an N-(acyl)-sphingosyl-1,3-cyclic phosphate + ethanolamine. The catalysed reaction is a 1-acyl-sn-glycero-3-phosphocholine = a 1-acyl-sn-glycero-2,3-cyclic phosphate + choline. It carries out the reaction a 1-acyl-sn-glycero-3-phosphoethanolamine = a 1-acyl-sn-glycero-2,3-cyclic phosphate + ethanolamine. Dermonecrotic toxins cleave the phosphodiester linkage between the phosphate and headgroup of certain phospholipids (sphingolipid and lysolipid substrates), forming an alcohol (often choline) and a cyclic phosphate. This toxin acts on sphingomyelin (SM). It may also act on ceramide phosphoethanolamine (CPE), lysophosphatidylcholine (LPC) and lysophosphatidylethanolamine (LPE), but not on lysophosphatidylserine (LPS), and lysophosphatidylglycerol (LPG). It acts by transphosphatidylation, releasing exclusively cyclic phosphate products as second products. It induces complement-dependent hemolysis, dermonecrosis, vascular permeability and platelet aggregation. This chain is Dermonecrotic toxin LiSicTox-alphaIA2ai, found in Loxosceles intermedia (Brown spider).